The following is a 332-amino-acid chain: L-lactate dehydrogenase A chain (332 aa).

NAD(+)-binding positions include 29–57 (GAVG…VEDK) and R99. R106, N138, and R169 together coordinate substrate. Position 138 (N138) interacts with NAD(+). H193 (proton acceptor) is an active-site residue. Substrate is bound at residue T248.

Belongs to the LDH/MDH superfamily. LDH family. In terms of assembly, homotetramer.

It is found in the cytoplasm. It carries out the reaction (S)-lactate + NAD(+) = pyruvate + NADH + H(+). It participates in fermentation; pyruvate fermentation to lactate; (S)-lactate from pyruvate: step 1/1. Its function is as follows. Interconverts simultaneously and stereospecifically pyruvate and lactate with concomitant interconversion of NADH and NAD(+). The protein is L-lactate dehydrogenase A chain (LDHA) of Columba livia (Rock dove).